The sequence spans 78 residues: Large ribosomal subunit protein bL28 (78 aa).

The tract at residues 1-24 is disordered; sequence MSQVCQVTGKRPVTGNNVSHSQRK.

Belongs to the bacterial ribosomal protein bL28 family.

The polypeptide is Large ribosomal subunit protein bL28 (Chromohalobacter salexigens (strain ATCC BAA-138 / DSM 3043 / CIP 106854 / NCIMB 13768 / 1H11)).